The primary structure comprises 410 residues: Multidrug resistance protein MdtM (410 aa).

At methionine 1–threonine 11 the chain is on the cytoplasmic side. A helical membrane pass occupies residues leucine 12–isoleucine 32. The Periplasmic portion of the chain corresponds to glutamine 33 to serine 48. Residues leucine 49–glycine 69 form a helical membrane-spanning segment. At proline 70 to arginine 78 the chain is on the cytoplasmic side. Residues proline 79–threonine 99 form a helical membrane-spanning segment. At serine 100 to glutamine 103 the chain is on the periplasmic side. A helical membrane pass occupies residues phenylalanine 104–valine 124. At threonine 125–alanine 140 the chain is on the cytoplasmic side. A helical transmembrane segment spans residues isoleucine 141 to methionine 161. Residues histidine 162 to lysine 167 are Periplasmic-facing. Residues valine 168–methionine 188 traverse the membrane as a helical segment. At proline 189–leucine 216 the chain is on the cytoplasmic side. Residues phenylalanine 217–valine 237 traverse the membrane as a helical segment. Residues serine 238 to serine 251 lie on the Periplasmic side of the membrane. A helical transmembrane segment spans residues glutamine 252–alanine 272. Residues arginine 273–arginine 282 are Cytoplasmic-facing. The helical transmembrane segment at phenylalanine 283–leucine 303 threads the bilayer. At leucine 304–histidine 307 the chain is on the periplasmic side. A helical membrane pass occupies residues valine 308 to proline 328. The Cytoplasmic segment spans residues threonine 329 to serine 348. Residues leucine 349–phenylalanine 369 traverse the membrane as a helical segment. The Periplasmic portion of the chain corresponds to asparagine 370–arginine 373. Residues leucine 374–leucine 394 form a helical membrane-spanning segment. Over leucine 395–glutamine 410 the chain is Cytoplasmic.

Belongs to the major facilitator superfamily. As to quaternary structure, monomer.

Its subcellular location is the cell inner membrane. It catalyses the reaction Na(+)(in) + 2 H(+)(out) = Na(+)(out) + 2 H(+)(in). The catalysed reaction is K(+)(in) + H(+)(out) = K(+)(out) + H(+)(in). Its activity is regulated as follows. Efflux is inhibited by the ionophore carbonyl cyanide 3-chlorophenylhydrazone (CCCP). In terms of biological role, proton-dependent efflux pump. Confers resistance to a broad spectrum of chemically unrelated substrates. Overexpression confers resistance to acriflavine, chloramphenicol, norfloxacin, ethidium bromide and tetraphenylphosphonium bromide (TPP). Can also export a broad range of quaternary ammonium compounds (QACs) and contribute to the intrinsic resistance of E.coli to these antimicrobial compounds. In addition to its role in multidrug resistance, MdtM likely plays a physiological role in alkaline pH homeostasis and in resistance to bile salts. May function in alkaline pH homeostasis when millimolar concentrations of sodium or potassium are present in the growth medium. When overexpressed, can confer a tolerance to alkaline pH values up to 9.75. Probably acts as a low-affinity antiporter that catalyzes the exchange of internal Na(+) and K(+) cations for extracellular protons to maintain a stable internal pH, acid relative to outside, during exposure to alkaline environments. Can also catalyze Rb(+)/H(+) and Li(+)/H(+) antiport, but not Ca(2+)/H(+) exchange. The exact stoichiometry of antiport is unknown. Finally, it could contribute to bile salt resistance by catalyzing the transport of bile salts out of the cell cytoplasm. Mediates a bile salt/H(+) exchange driven by the electrochemical gradient. Binds to cholate and deoxycholate with micromolar affinity and catalyzes both cholate/H(+) and deoxycholate/H(+) exchange reactions. The polypeptide is Multidrug resistance protein MdtM (Escherichia coli (strain K12)).